Reading from the N-terminus, the 171-residue chain is Crossover junction endodeoxyribonuclease RuvC (171 aa).

Catalysis depends on residues Asp-7, Glu-66, and Asp-138. Residues Asp-7, Glu-66, and Asp-138 each contribute to the Mg(2+) site.

The protein belongs to the RuvC family. Homodimer which binds Holliday junction (HJ) DNA. The HJ becomes 2-fold symmetrical on binding to RuvC with unstacked arms; it has a different conformation from HJ DNA in complex with RuvA. In the full resolvosome a probable DNA-RuvA(4)-RuvB(12)-RuvC(2) complex forms which resolves the HJ. Requires Mg(2+) as cofactor.

The protein resides in the cytoplasm. The enzyme catalyses Endonucleolytic cleavage at a junction such as a reciprocal single-stranded crossover between two homologous DNA duplexes (Holliday junction).. In terms of biological role, the RuvA-RuvB-RuvC complex processes Holliday junction (HJ) DNA during genetic recombination and DNA repair. Endonuclease that resolves HJ intermediates. Cleaves cruciform DNA by making single-stranded nicks across the HJ at symmetrical positions within the homologous arms, yielding a 5'-phosphate and a 3'-hydroxyl group; requires a central core of homology in the junction. The consensus cleavage sequence is 5'-(A/T)TT(C/G)-3'. Cleavage occurs on the 3'-side of the TT dinucleotide at the point of strand exchange. HJ branch migration catalyzed by RuvA-RuvB allows RuvC to scan DNA until it finds its consensus sequence, where it cleaves and resolves the cruciform DNA. In Francisella tularensis subsp. mediasiatica (strain FSC147), this protein is Crossover junction endodeoxyribonuclease RuvC.